Consider the following 207-residue polypeptide: Outer-membrane lipoprotein LolB (207 aa).

Positions 1 to 21 are cleaved as a signal peptide; the sequence is MPLPDFRLIRLLPLAALVLTA. Cysteine 22 is lipidated: N-palmitoyl cysteine. The S-diacylglycerol cysteine moiety is linked to residue cysteine 22.

The protein belongs to the LolB family. Monomer.

Its subcellular location is the cell outer membrane. Plays a critical role in the incorporation of lipoproteins in the outer membrane after they are released by the LolA protein. The polypeptide is Outer-membrane lipoprotein LolB (Escherichia coli (strain SMS-3-5 / SECEC)).